A 392-amino-acid polypeptide reads, in one-letter code: Aryl-hydrocarbon-interacting protein-like 1 (392 aa).

Residues 53 to 145 (RQVDQPMHII…DLDELQKEPQ (93 aa)) enclose the PPIase FKBP-type domain. 3 TPR repeats span residues 178–211 (VPVL…LRNL), 230–263 (NTLT…HPGI), and 264–297 (VKAY…EPSM). A disordered region spans residues 329-392 (QGATQPPAEP…PLSPGHSLQH (64 aa)). Composition is skewed to pro residues over residues 335-346 (PAEPPAQPPTAP) and 355-366 (PADPPAEPPTAP).

Interacts with NUB1.

The protein localises to the cytoplasm. It localises to the nucleus. May be important in protein trafficking and/or protein folding and stabilization. This chain is Aryl-hydrocarbon-interacting protein-like 1 (AIPL1), found in Macaca mulatta (Rhesus macaque).